A 396-amino-acid chain; its full sequence is GPN-loop GTPase 1 (396 aa).

Positions 1-13 are enriched in low complexity; it reads MSETTATSTTTTK. A disordered region spans residues 1-30; sequence MSETTATSTTTTKTTDKDNVNNNNNNENKE. Residue 44–49 participates in GTP binding; the sequence is GSGKTT. Residues 101 to 103 carry the Gly-Pro-Asn (GPN)-loop; involved in dimer interface motif; it reads GPN. 204-207 serves as a coordination point for GTP; that stretch reads NKID. Residues 284–387 are a coiled coil; that stretch reads YKADLEKIKK…ERLEDQRAYE (104 aa). Residues 325–342 are compositionally biased toward basic and acidic residues; it reads DFKKEKKRENQEKTKNIY. Residues 325–396 are disordered; the sequence is DFKKEKKREN…ESLMSSIKKI (72 aa). A compositionally biased stretch (acidic residues) spans 343–380; it reads DDEEDDYRDDRDMEDSGEYESYEDEQEEGDYENEEERL.

This sequence belongs to the GPN-loop GTPase family. In terms of assembly, heterodimer with gpn3. Binds to RNA polymerase II (RNAPII).

The protein resides in the cytoplasm. The protein localises to the nucleus. In terms of biological role, small GTPase required for proper nuclear import of RNA polymerase II (RNAPII). May act at an RNAP assembly step prior to nuclear import. The polypeptide is GPN-loop GTPase 1 (gpn1) (Dictyostelium discoideum (Social amoeba)).